Here is a 343-residue protein sequence, read N- to C-terminus: Cytosolic Fe-S cluster assembly factor CFD1 (343 aa).

Residue 15–22 (GKGGVGKS) coordinates ATP. Composition is skewed to polar residues over residues 80-91 (PSSDGLNGSQRA) and 99-110 (ESSSSTVETAPQ). The disordered stretch occupies residues 80–110 (PSSDGLNGSQRANKPDDSNESSSSTVETAPQ). [4Fe-4S] cluster-binding residues include cysteine 241 and cysteine 244.

Belongs to the Mrp/NBP35 ATP-binding proteins family. NUBP2/CFD1 subfamily. Heterotetramer of 2 NBP35 and 2 CFD1 chains. [4Fe-4S] cluster is required as a cofactor.

It is found in the cytoplasm. Its function is as follows. Component of the cytosolic iron-sulfur (Fe/S) protein assembly (CIA) machinery. Required for maturation of extramitochondrial Fe-S proteins. The NBP35-CFD1 heterotetramer forms a Fe-S scaffold complex, mediating the de novo assembly of an Fe-S cluster and its transfer to target apoproteins. In Coccidioides immitis (strain RS) (Valley fever fungus), this protein is Cytosolic Fe-S cluster assembly factor CFD1.